A 226-amino-acid chain; its full sequence is Ribonuclease 3 (226 aa).

The 123-residue stretch at 7–129 folds into the RNase III domain; that stretch reads LPRLCRTLGY…IIGAVYLDSD (123 aa). A Mg(2+)-binding site is contributed by glutamate 42. Aspartate 46 is an active-site residue. Residues aspartate 115 and glutamate 118 each coordinate Mg(2+). Glutamate 118 is an active-site residue. The region spanning 156–226 is the DRBM domain; sequence DAKTLLQEHL…AAQVLELLKK (71 aa).

Belongs to the ribonuclease III family. Homodimer. It depends on Mg(2+) as a cofactor.

It is found in the cytoplasm. It catalyses the reaction Endonucleolytic cleavage to 5'-phosphomonoester.. Its function is as follows. Digests double-stranded RNA. Involved in the processing of primary rRNA transcript to yield the immediate precursors to the large and small rRNAs (23S and 16S). Processes some mRNAs, and tRNAs when they are encoded in the rRNA operon. Processes pre-crRNA and tracrRNA of type II CRISPR loci if present in the organism. In Shewanella baltica (strain OS185), this protein is Ribonuclease 3.